The primary structure comprises 368 residues: Riboflavin biosynthesis protein RibD (368 aa).

A deaminase region spans residues 1-146; sequence MISDQTHMRR…EAFCFRIKHQ (146 aa). The 123-residue stretch at 2 to 124 folds into the CMP/dCMP-type deaminase domain; the sequence is ISDQTHMRRC…RLRQAGIEVK (123 aa). Residue His-51 participates in Zn(2+) binding. Glu-53 functions as the Proton donor in the catalytic mechanism. Residues Cys-76 and Cys-85 each coordinate Zn(2+). Residues 147–368 are reductase; sequence RPFGIFKYAM…GNDDNGQSNI (222 aa). Ala-155 is an NADP(+) binding site. Ser-169 is a substrate binding site. Position 171 (Trp-171) interacts with NADP(+). Substrate is bound at residue Arg-185. 2 residues coordinate NADP(+): Thr-197 and Asp-201. Substrate is bound by residues Leu-205 and Glu-289. 291 to 297 lines the NADP(+) pocket; sequence GGILAAE.

This sequence in the N-terminal section; belongs to the cytidine and deoxycytidylate deaminase family. In the C-terminal section; belongs to the HTP reductase family. It depends on Zn(2+) as a cofactor.

It catalyses the reaction 2,5-diamino-6-hydroxy-4-(5-phosphoribosylamino)-pyrimidine + H2O + H(+) = 5-amino-6-(5-phospho-D-ribosylamino)uracil + NH4(+). It carries out the reaction 5-amino-6-(5-phospho-D-ribitylamino)uracil + NADP(+) = 5-amino-6-(5-phospho-D-ribosylamino)uracil + NADPH + H(+). The protein operates within cofactor biosynthesis; riboflavin biosynthesis; 5-amino-6-(D-ribitylamino)uracil from GTP: step 2/4. It participates in cofactor biosynthesis; riboflavin biosynthesis; 5-amino-6-(D-ribitylamino)uracil from GTP: step 3/4. Converts 2,5-diamino-6-(ribosylamino)-4(3h)-pyrimidinone 5'-phosphate into 5-amino-6-(ribosylamino)-2,4(1h,3h)-pyrimidinedione 5'-phosphate. This is Riboflavin biosynthesis protein RibD (ribD) from Synechocystis sp. (strain ATCC 27184 / PCC 6803 / Kazusa).